We begin with the raw amino-acid sequence, 422 residues long: G-protein coupled receptor 83 (422 aa).

An N-terminal signal peptide occupies residues 1–17; the sequence is MNVPPVLLLFLLSSVRA. The Extracellular segment spans residues 18–70; the sequence is TEQPQVVTEHPSMDAALTGANASHFWANYTFSDWQNFVGRRRYGAESQNPTVK. Residues 71–91 traverse the membrane as a helical segment; that stretch reads ALLIVAYSFIIVFSLFGNVLV. The Cytoplasmic portion of the chain corresponds to 92–106; it reads CHVIFKNQRMHSATS. The chain crosses the membrane as a helical span at residues 107 to 127; it reads LFIVNLAVADIMITLLNTPFT. Residues 128–143 are Extracellular-facing; that stretch reads LVRFVNSTWVFGKGMC. A disulfide bond links C143 and C223. The helical transmembrane segment at 144–166 threads the bilayer; sequence HVSRFAQYCSLHVSALTLTAIAV. The Cytoplasmic portion of the chain corresponds to 167–184; the sequence is DRHQVIMHPLKPRISITK. The chain crosses the membrane as a helical span at residues 185–205; the sequence is GVIYIAVIWVMATFFSLPHAI. Over 206–236 the chain is Extracellular; that stretch reads CQKLFTFKYSEDIVRSLCLPDFPEPADLFWK. The helical transmembrane segment at 237–257 threads the bilayer; it reads YLDLATFILLYLLPLFIISVA. Over 258 to 292 the chain is Cytoplasmic; that stretch reads YARVAKKLWLCNTIGDVTTEQYLALRRKKKTTVKM. Residues 293 to 313 traverse the membrane as a helical segment; it reads LVLVVVLFALCWFPLNCYVLL. Topologically, residues 314 to 326 are extracellular; the sequence is LSSKAIHTNNALY. A helical membrane pass occupies residues 327-347; sequence FAFHWFAMSSTCYNPFIYCWL. Residues 348–422 are Cytoplasmic-facing; sequence NENFRVELKA…SSVEPTVAVS (75 aa). The segment at 401–422 is disordered; that stretch reads PSSQIQSGKTDLSSVEPTVAVS.

The protein belongs to the G-protein coupled receptor 1 family. Expressed preferentially in brain, and its neuronal expression is relegated to limbic brain regions, particularly in forebrain.

Its subcellular location is the cell membrane. In terms of biological role, G-protein coupled receptor for PEN, a neuropeptide produced from the precursor protein, proSAAS (encoded by PCSK1N). Acts through a G(i)- and G(q)-alpha-alpha-mediated pathway in response to PEN. Plays a role in food intake and body weight regulation. May contribute to the regulation of anxiety-related behaviors. In Rattus norvegicus (Rat), this protein is G-protein coupled receptor 83.